The primary structure comprises 161 residues: 6,7-dimethyl-8-ribityllumazine synthase (161 aa).

5-amino-6-(D-ribitylamino)uracil contacts are provided by residues Trp-31, 63 to 65 (SFE), and 85 to 87 (VVI). A (2S)-2-hydroxy-3-oxobutyl phosphate-binding site is contributed by 90 to 91 (GT). The active-site Proton donor is the His-93. A 5-amino-6-(D-ribitylamino)uracil-binding site is contributed by Phe-118. Arg-132 contributes to the (2S)-2-hydroxy-3-oxobutyl phosphate binding site.

This sequence belongs to the DMRL synthase family.

The catalysed reaction is (2S)-2-hydroxy-3-oxobutyl phosphate + 5-amino-6-(D-ribitylamino)uracil = 6,7-dimethyl-8-(1-D-ribityl)lumazine + phosphate + 2 H2O + H(+). It functions in the pathway cofactor biosynthesis; riboflavin biosynthesis; riboflavin from 2-hydroxy-3-oxobutyl phosphate and 5-amino-6-(D-ribitylamino)uracil: step 1/2. Functionally, catalyzes the formation of 6,7-dimethyl-8-ribityllumazine by condensation of 5-amino-6-(D-ribitylamino)uracil with 3,4-dihydroxy-2-butanone 4-phosphate. This is the penultimate step in the biosynthesis of riboflavin. This chain is 6,7-dimethyl-8-ribityllumazine synthase, found in Arthrobacter sp. (strain FB24).